The primary structure comprises 243 residues: Protein GIGAS CELL1 (243 aa).

Interacts with APC/C activators such as FZR1, FZR2, FZR3, CDC20.1 and CDC20.5. Post-translationally, phosphorylated by CDKA-1 in complex with CYCA1-2. In terms of tissue distribution, expressed in rapidly dividing tissues such as shoot apical meristem and young leaves. Associated with cell division but also with specific cell types.

Negative regulator of the anaphase-promoting complex/cyclosome (APC/C) ubiquitin ligase required for proper mitotic and meiotic progression and cell fate determination. Involved in entry into both meiosis I and meiosis II. Prevents endomitosis by preferentially inhibiting APC/C(CDC20). Required for megagametophyte and endosperm development. Triggers mitotic cyclins (e.g. CYCB1-1 and CYCB1-2) accumulation. Confers immunity to bacterial pathogens (e.g. Pseudomonas syringae pv. tomato DC3000), which is associated with increased expression of disease resistance (R) genes. GIG1 and PANS1 are part of a network linking centromere cohesion and cell cycle progression through control of APC/C activity. The chain is Protein GIGAS CELL1 (GIG1) from Arabidopsis thaliana (Mouse-ear cress).